Consider the following 625-residue polypeptide: Pyriculol/pyriculariol biosynthesis cluster transcription factor 1 (625 aa).

2 disordered regions span residues 1–83 and 466–496; these read MATE…ATQD and PMSA…LPAS. Residues 46–59 show a composition bias toward low complexity; the sequence is TPSPSTPANPNSAS. The homeobox DNA-binding region spans 73 to 132; sequence KNQKRQRATQDQLTTLEQEFAKNPTPTATVRDRIAEEINMTERSVQIWFQNRRAKIKLMA. Over residues 467 to 496 the composition is skewed to polar residues; the sequence is MSATTAPSPSEYNSPSFFSQAPENTPLPAS.

Its subcellular location is the nucleus. Transcriptional regulator; part of the gene cluster that mediates the biosynthesis of pyriculol and pyriculariol, two heptaketides that induce lesion formation upon application on rice leaves but are dispensable for pathogenicity. With TRF1, negatively regulates the expression of the gene cluster and the subsequent pyriculol and pyriculariol production. The sequence is that of Pyriculol/pyriculariol biosynthesis cluster transcription factor 1 from Pyricularia oryzae (strain 70-15 / ATCC MYA-4617 / FGSC 8958) (Rice blast fungus).